The following is a 78-amino-acid chain: Defensin beta 136 (78 aa).

The first 21 residues, Met-1 to Gly-21, serve as a signal peptide directing secretion. Disulfide bonds link Cys-33–Cys-60, Cys-40–Cys-54, and Cys-44–Cys-61.

This sequence belongs to the beta-defensin family.

The protein resides in the secreted. Host defense peptide that exhibits antibacterial and antifungal activity. Exhibits antimicrobial activity against E.coli, S.aureus and C.albicans (in vitro). Has high lipopolysaccharide (LPS)-binding affinity, and may thereby be involved in immunoregulation through LPS neutralization. In Homo sapiens (Human), this protein is Defensin beta 136 (DEFB136).